The following is a 450-amino-acid chain: MKRRYFGTDGIRGQSNVFPMTPDLAMRVGIAAGTIFRRGNHRHRVVIGKDTRLSGYMLENAMVAGFTAAGLDAFILGPIPTPAVAMLTRSLRCDIGVMISASHNPYEDNGIKLFGPDGYKLSDDLEAEIEDLLEKDLNAQLAKSDDIGRAKRVDGVHDRYIEHAKRTLPRDVTLQGLRIAIDCANGAAYKVAPAVLWELGAEVVTIGNEPNGTNINLNCGSTSPVALQKKVDEVRADIGIALDGDADRVIIVDENGSIVDGDQLMAVIAESWAESQQLRGNGIVATVMSNLGLERFLDDRGMALARTRVGDRYVVEHMRQHNYNVGGEQSGHIVLSDYGTTGDGLVAALQILAAVKRTGRTVSEVCRRFEPVPQLLRNVRISGGKPLEDIQVQKAIADAEAELAKNGRLVIRPSGTEPLIRVMAEGDDRAQIERIVNELIGTISNVRTAA.

Ser102 (phosphoserine intermediate) is an active-site residue. Residues Ser102, Asp243, Asp245, and Asp247 each coordinate Mg(2+). Ser102 is modified (phosphoserine).

This sequence belongs to the phosphohexose mutase family. Mg(2+) is required as a cofactor. Activated by phosphorylation.

It catalyses the reaction alpha-D-glucosamine 1-phosphate = D-glucosamine 6-phosphate. Its function is as follows. Catalyzes the conversion of glucosamine-6-phosphate to glucosamine-1-phosphate. The sequence is that of Phosphoglucosamine mutase from Rhizobium leguminosarum bv. trifolii (strain WSM2304).